Reading from the N-terminus, the 1700-residue chain is Rho guanine nucleotide exchange factor 28 (1700 aa).

The tract at residues 288–343 (TEKATMPSGAAETEEEVRNLESGRSPSEEEEDAKSIKSQVDGPSEHEDQDRLPLDR) is disordered. Phosphoserine occurs at positions 312 and 314. Over residues 330–343 (PSEHEDQDRLPLDR) the composition is skewed to basic and acidic residues. The residue at position 478 (S478) is a Phosphoserine. The interval 483–532 (VADSEGEGGSEPPICYAVGSQSSPRTGLPSGDELDSFETNTEPDCNISRT) is disordered. S623 carries the phosphoserine modification. The segment at 651–698 (RHQFVPGTFSGVLQCSGCDKTLLGKESLQCANCKANTHKGCKDAVPPC) adopts a Phorbol-ester/DAG-type zinc-finger fold. One can recognise a DH domain in the interval 846-1041 (KRQDVIFELM…KDMIAAVDLK (196 aa)). Residues 1095–1184 (ATGRFKDILA…NWMRRIQQAV (90 aa)) enclose the PH domain. 2 disordered regions span residues 1184-1205 (VESC…RRKA) and 1289-1328 (KMGD…TEGT). Over residues 1191 to 1205 (EGGRTSESDEERRKA) the composition is skewed to basic and acidic residues. Residues 1292–1301 (DVSQSSEESP) form an interaction with PTK2/FAK1; required for regulation of axonal branching and synapse formation region. The span at 1309 to 1325 (TPSTQDVPASPTASLVT) shows a compositional bias: polar residues. The interval 1369 to 1380 (IIQAIQNLTRLL) is mediates cytoplasmic retention and interaction with YWHAH. A coiled-coil region spans residues 1421–1522 (QEKSRYLEKQ…RERQKMRVQQ (102 aa)). Positions 1421–1700 (QEKSRYLEKQ…DGAEENILYL (280 aa)) are interaction with microtubules. An RNA-binding region spans residues 1493-1524 (QLQEYQQSLERLREGQRMVERERQKMRVQQGL). S1535 carries the post-translational modification Phosphoserine. The interval 1563–1576 (FINEAFGHMSLNTS) is mediates cytoplasmic retention and interaction with MAPK8IP1. Residues 1602 to 1700 (SESPTELKID…DGAEENILYL (99 aa)) form a disordered region. Residue S1604 is modified to Phosphoserine. Positions 1647 to 1663 (DLDSFQSESSSPQDSNQ) are enriched in low complexity. The segment covering 1664 to 1675 (RGPQPQTLTTEA) has biased composition (polar residues).

As to quaternary structure, homooligomer; forms some cytoplasmic aggregates. Forms a complex with MAPK8 and MAPK8IP1. Interacts with RHOA. Interacts with microtubules. Interacts with YWHAE and YWHAH. Interacts with PTK2/FAK1. Interacts with NEFL. Interacts with CTNND2; prevents interaction with RHOA. In terms of processing, phosphorylated on tyrosine upon stimulation of cells by laminin. As to expression, highly enriched in the brain (at protein level). Also detected in lung and kidney.

The protein resides in the cytoplasm. It is found in the cell membrane. Its function is as follows. Functions as a RHOA-specific guanine nucleotide exchange factor regulating signaling pathways downstream of integrins and growth factor receptors. Functions in axonal branching, synapse formation and dendritic morphogenesis. Also functions in focal adhesion formation, cell motility and B-lymphocytes activation. May regulate NEFL expression and aggregation and play a role in apoptosis. The sequence is that of Rho guanine nucleotide exchange factor 28 (Arhgef28) from Mus musculus (Mouse).